The sequence spans 376 residues: Methionine import ATP-binding protein MetN 2 (376 aa).

Positions 1 to 25 (MTATAQRQRPIDTTGAGQRAQQAEL) are disordered. Residues 34–273 (VRFINLGKTY…PQHEVSKTLL (240 aa)) enclose the ABC transporter domain. 70 to 77 (GRSGAGKS) is an ATP binding site.

Belongs to the ABC transporter superfamily. Methionine importer (TC 3.A.1.24) family. The complex is composed of two ATP-binding proteins (MetN), two transmembrane proteins (MetI) and a solute-binding protein (MetQ).

The protein resides in the cell inner membrane. The enzyme catalyses L-methionine(out) + ATP + H2O = L-methionine(in) + ADP + phosphate + H(+). It carries out the reaction D-methionine(out) + ATP + H2O = D-methionine(in) + ADP + phosphate + H(+). Its function is as follows. Part of the ABC transporter complex MetNIQ involved in methionine import. Responsible for energy coupling to the transport system. This Pseudomonas syringae pv. syringae (strain B728a) protein is Methionine import ATP-binding protein MetN 2.